Reading from the N-terminus, the 234-residue chain is Two-component response regulator ARR9 (234 aa).

The Response regulatory domain occupies 10–147 (HVLAVDDSLF…DLNKLKPHMM (138 aa)). At D80 the chain carries 4-aspartylphosphate.

This sequence belongs to the ARR family. Type-A subfamily. Interacts with AHP1 and AHP3. Post-translationally, two-component system major event consists of a His-to-Asp phosphorelay between a sensor histidine kinase (HK) and a response regulator (RR). In plants, the His-to-Asp phosphorelay involves an additional intermediate named Histidine-containing phosphotransfer protein (HPt). This multistep phosphorelay consists of a His-Asp-His-Asp sequential transfer of a phosphate group between first a His and an Asp of the HK protein, followed by the transfer to a conserved His of the HPt protein and finally the transfer to an Asp in the receiver domain of the RR protein. Predominantly expressed in roots.

The protein resides in the nucleus. Functions as a response regulator involved in His-to-Asp phosphorelay signal transduction system. Phosphorylation of the Asp residue in the receiver domain activates the ability of the protein to promote the transcription of target genes. Type-A response regulators seem to act as negative regulators of the cytokinin signaling. The sequence is that of Two-component response regulator ARR9 (ARR9) from Arabidopsis thaliana (Mouse-ear cress).